Reading from the N-terminus, the 396-residue chain is L-lactate dehydrogenase (396 aa).

The region spanning Met-1–Gly-380 is the FMN hydroxy acid dehydrogenase domain. Tyr-24 serves as a coordination point for substrate. FMN contacts are provided by Ser-106 and Gln-127. Residue Tyr-129 participates in substrate binding. Residue Thr-155 coordinates FMN. Arg-164 serves as a coordination point for substrate. Lys-251 is an FMN binding site. The Proton acceptor role is filled by His-275. Substrate is bound at residue Arg-278. Asp-306–Arg-330 contacts FMN.

This sequence belongs to the FMN-dependent alpha-hydroxy acid dehydrogenase family. FMN is required as a cofactor.

It localises to the cell inner membrane. The catalysed reaction is (S)-lactate + A = pyruvate + AH2. Its function is as follows. Catalyzes the conversion of L-lactate to pyruvate. Is coupled to the respiratory chain. This is L-lactate dehydrogenase from Escherichia coli O45:K1 (strain S88 / ExPEC).